A 276-amino-acid polypeptide reads, in one-letter code: 2-dehydro-3-deoxyphosphooctonate aldolase (276 aa).

It belongs to the KdsA family.

The protein localises to the cytoplasm. The enzyme catalyses D-arabinose 5-phosphate + phosphoenolpyruvate + H2O = 3-deoxy-alpha-D-manno-2-octulosonate-8-phosphate + phosphate. The protein operates within carbohydrate biosynthesis; 3-deoxy-D-manno-octulosonate biosynthesis; 3-deoxy-D-manno-octulosonate from D-ribulose 5-phosphate: step 2/3. Its pathway is bacterial outer membrane biogenesis; lipopolysaccharide biosynthesis. The polypeptide is 2-dehydro-3-deoxyphosphooctonate aldolase (Helicobacter acinonychis (strain Sheeba)).